A 370-amino-acid chain; its full sequence is 3-dehydroquinate synthase (370 aa).

NAD(+) contacts are provided by residues 112 to 116, 136 to 137, Lys149, Lys158, and 176 to 179; these read GVIGD, TT, and TLKT. Zn(2+) is bound by residues Glu191, His256, and His273.

The protein belongs to the sugar phosphate cyclases superfamily. Dehydroquinate synthase family. It depends on Co(2+) as a cofactor. Zn(2+) is required as a cofactor. The cofactor is NAD(+).

It localises to the cytoplasm. It carries out the reaction 7-phospho-2-dehydro-3-deoxy-D-arabino-heptonate = 3-dehydroquinate + phosphate. It participates in metabolic intermediate biosynthesis; chorismate biosynthesis; chorismate from D-erythrose 4-phosphate and phosphoenolpyruvate: step 2/7. In terms of biological role, catalyzes the conversion of 3-deoxy-D-arabino-heptulosonate 7-phosphate (DAHP) to dehydroquinate (DHQ). The polypeptide is 3-dehydroquinate synthase (Prochlorococcus marinus (strain MIT 9211)).